We begin with the raw amino-acid sequence, 211 residues long: 2,3-bisphosphoglycerate-dependent phosphoglycerate mutase (211 aa).

Substrate is bound by residues 9–16 (RHGQSDWN), 22–23 (TG), R61, 88–91 (ERDY), K99, 115–116 (RR), and 159–160 (GN). Residue H10 is the Tele-phosphohistidine intermediate of the active site. E88 acts as the Proton donor/acceptor in catalysis.

It belongs to the phosphoglycerate mutase family. BPG-dependent PGAM subfamily. As to quaternary structure, homodimer.

It catalyses the reaction (2R)-2-phosphoglycerate = (2R)-3-phosphoglycerate. Its pathway is carbohydrate degradation; glycolysis; pyruvate from D-glyceraldehyde 3-phosphate: step 3/5. Its function is as follows. Catalyzes the interconversion of 2-phosphoglycerate and 3-phosphoglycerate. The sequence is that of 2,3-bisphosphoglycerate-dependent phosphoglycerate mutase from Rhizobium johnstonii (strain DSM 114642 / LMG 32736 / 3841) (Rhizobium leguminosarum bv. viciae).